The following is a 225-amino-acid chain: uncharacterized protein (225 aa).

The helical transmembrane segment at 12–32 (AGFMMIFVFVIASFLLVLLFF) threads the bilayer.

The protein resides in the cell membrane. This is an uncharacterized protein from Bacillus subtilis (strain 168).